We begin with the raw amino-acid sequence, 317 residues long: Olfactory receptor 5K17 (317 aa).

At 1-28 the chain is on the extracellular side; it reads MMKANHSLTVEFILIGFSDHTDLKTLLF. N-linked (GlcNAc...) asparagine glycosylation occurs at N5. Residues 29-49 traverse the membrane as a helical segment; it reads LLFSAIYLVTIVGNLGLVALI. Over 50–56 the chain is Cytoplasmic; sequence YMEPRLH. The chain crosses the membrane as a helical span at residues 57–77; it reads TPMYIFLGNLALMDSCCSCAI. Residues 78 to 93 lie on the Extracellular side of the membrane; the sequence is TPKMLENFFSVDRRIS. A helical membrane pass occupies residues 94–114; sequence LYECMVQFYFLCLAETADCFL. C97 and C189 form a disulfide bridge. The Cytoplasmic portion of the chain corresponds to 115–144; it reads LAAMAYDRYVAICNPLQYHTMMSKKLSIQM. Residues 145 to 165 form a helical membrane-spanning segment; it reads SIGTFIASNLHSLIHTGCLLR. The Extracellular segment spans residues 166–198; it reads LNFCKSRRIDHFFCDILPLYKLSCTDPFINELM. The helical transmembrane segment at 199-219 threads the bilayer; sequence LYIFSMPIQVFTITTVLVSYS. The Cytoplasmic segment spans residues 220 to 239; sequence CILLTVFKMKSKDGRGKAFS. The chain crosses the membrane as a helical span at residues 240 to 259; the sequence is TCASHFFSVSIFYICLLMYI. Residues 260–268 are Extracellular-facing; that stretch reads GPSKNSNKD. The helical transmembrane segment at 269–289 threads the bilayer; it reads IPVGVFYTIVIPLLNPFIYSL. Residues 290–317 are Cytoplasmic-facing; that stretch reads RNKEVVNAVKKVMKTHSIFKNSSASIAH.

The protein belongs to the G-protein coupled receptor 1 family.

It is found in the cell membrane. Its function is as follows. Potential odorant receptor. The protein is Olfactory receptor 5K17 of Mus musculus (Mouse).